Here is a 662-residue protein sequence, read N- to C-terminus: UvrABC system protein B (662 aa).

The Helicase ATP-binding domain maps to 31–188 (DNIEGGEKAQ…NDLVDIQFER (158 aa)). ATP is bound at residue 44-51 (GATGTGKT). The short motif at 97–120 (YYDYYQPEAYVPSSDTYIEKDSSV) is the Beta-hairpin element. The Helicase C-terminal domain occupies 435 to 601 (QIDDLLGEIN…TIKKEIRDLI (167 aa)). Residues 626-661 (KELVKKLEKQMQEAVEVLDFELAAQIRDMMLEVKAL) form the UVR domain.

It belongs to the UvrB family. In terms of assembly, forms a heterotetramer with UvrA during the search for lesions. Interacts with UvrC in an incision complex.

Its subcellular location is the cytoplasm. Functionally, the UvrABC repair system catalyzes the recognition and processing of DNA lesions. A damage recognition complex composed of 2 UvrA and 2 UvrB subunits scans DNA for abnormalities. Upon binding of the UvrA(2)B(2) complex to a putative damaged site, the DNA wraps around one UvrB monomer. DNA wrap is dependent on ATP binding by UvrB and probably causes local melting of the DNA helix, facilitating insertion of UvrB beta-hairpin between the DNA strands. Then UvrB probes one DNA strand for the presence of a lesion. If a lesion is found the UvrA subunits dissociate and the UvrB-DNA preincision complex is formed. This complex is subsequently bound by UvrC and the second UvrB is released. If no lesion is found, the DNA wraps around the other UvrB subunit that will check the other stand for damage. The protein is UvrABC system protein B of Streptococcus pneumoniae (strain Taiwan19F-14).